The chain runs to 290 residues: Ribosomal RNA small subunit methyltransferase A (290 aa).

S-adenosyl-L-methionine contacts are provided by Asn27, Leu29, Gly54, Glu75, Asp100, and Asn125.

Belongs to the class I-like SAM-binding methyltransferase superfamily. rRNA adenine N(6)-methyltransferase family. RsmA subfamily.

The protein resides in the cytoplasm. It catalyses the reaction adenosine(1518)/adenosine(1519) in 16S rRNA + 4 S-adenosyl-L-methionine = N(6)-dimethyladenosine(1518)/N(6)-dimethyladenosine(1519) in 16S rRNA + 4 S-adenosyl-L-homocysteine + 4 H(+). Functionally, specifically dimethylates two adjacent adenosines (A1518 and A1519) in the loop of a conserved hairpin near the 3'-end of 16S rRNA in the 30S particle. May play a critical role in biogenesis of 30S subunits. This chain is Ribosomal RNA small subunit methyltransferase A, found in Streptococcus pyogenes serotype M1.